A 151-amino-acid polypeptide reads, in one-letter code: MNSIKVKIAYVRKDKAPKLPQYATPGAAGVDLQASLDQELTIEPGQIVKIPTGLAIELPHAGVGAFVFARSGLASKYGLALANGVGVIDSDYRGEILVAVINQGSEPFVVKDGDRIAQMVFLPVFIGEFYLADQLDETGRGCGGFGSTGVS.

Residues 70 to 72, Asn83, and 87 to 89 contribute to the substrate site; these read RSG and VID.

Belongs to the dUTPase family. It depends on Mg(2+) as a cofactor.

It carries out the reaction dUTP + H2O = dUMP + diphosphate + H(+). It participates in pyrimidine metabolism; dUMP biosynthesis; dUMP from dCTP (dUTP route): step 2/2. This enzyme is involved in nucleotide metabolism: it produces dUMP, the immediate precursor of thymidine nucleotides and it decreases the intracellular concentration of dUTP so that uracil cannot be incorporated into DNA. This Desulfitobacterium hafniense (strain DSM 10664 / DCB-2) protein is Deoxyuridine 5'-triphosphate nucleotidohydrolase.